The sequence spans 370 residues: Aspartate-semialdehyde dehydrogenase (370 aa).

Residues 10–13 (RGMV), 37–38 (TS), and Q73 contribute to the NADP(+) site. R102 contacts phosphate. C135 (acyl-thioester intermediate) is an active-site residue. Q162 lines the substrate pocket. Residues 165 to 166 (SG) and P193 contribute to the NADP(+) site. E241 is a substrate binding site. A phosphate-binding site is contributed by K244. R268 contacts substrate. Catalysis depends on H275, which acts as the Proton acceptor. Residue Q351 coordinates NADP(+).

This sequence belongs to the aspartate-semialdehyde dehydrogenase family. In terms of assembly, homodimer.

The catalysed reaction is L-aspartate 4-semialdehyde + phosphate + NADP(+) = 4-phospho-L-aspartate + NADPH + H(+). Its pathway is amino-acid biosynthesis; L-lysine biosynthesis via DAP pathway; (S)-tetrahydrodipicolinate from L-aspartate: step 2/4. The protein operates within amino-acid biosynthesis; L-methionine biosynthesis via de novo pathway; L-homoserine from L-aspartate: step 2/3. It participates in amino-acid biosynthesis; L-threonine biosynthesis; L-threonine from L-aspartate: step 2/5. In terms of biological role, catalyzes the NADPH-dependent formation of L-aspartate-semialdehyde (L-ASA) by the reductive dephosphorylation of L-aspartyl-4-phosphate. The chain is Aspartate-semialdehyde dehydrogenase (asd) from Pseudomonas aeruginosa (strain ATCC 15692 / DSM 22644 / CIP 104116 / JCM 14847 / LMG 12228 / 1C / PRS 101 / PAO1).